Consider the following 285-residue polypeptide: Probable enoyl-CoA hydratase echA12 (285 aa).

This sequence belongs to the enoyl-CoA hydratase/isomerase family.

It carries out the reaction a (3S)-3-hydroxyacyl-CoA = a (2E)-enoyl-CoA + H2O. It catalyses the reaction a 4-saturated-(3S)-3-hydroxyacyl-CoA = a (3E)-enoyl-CoA + H2O. Its function is as follows. Could possibly oxidize fatty acids using specific components. The protein is Probable enoyl-CoA hydratase echA12 (echA12) of Mycobacterium tuberculosis (strain CDC 1551 / Oshkosh).